The chain runs to 243 residues: uncharacterized protein (243 aa).

Residues 26–204 (RVGLVLDITG…ISDDELYDAL (179 aa)) enclose the VWFA domain. The disordered stretch occupies residues 222–243 (REQEPPAEKPKKKGFFSRLFSK). A compositionally biased stretch (basic residues) spans 231–243 (PKKKGFFSRLFSK).

This is an uncharacterized protein from Bacillus subtilis (strain 168).